Here is a 121-residue protein sequence, read N- to C-terminus: Small ribosomal subunit protein uS13 (121 aa).

The interval 94 to 121 (RGLPVRGQSTKNNARTRKGPKRTVGAKR) is disordered. Residues 107 to 121 (ARTRKGPKRTVGAKR) show a composition bias toward basic residues.

Belongs to the universal ribosomal protein uS13 family. In terms of assembly, part of the 30S ribosomal subunit. Forms a loose heterodimer with protein S19. Forms two bridges to the 50S subunit in the 70S ribosome.

Located at the top of the head of the 30S subunit, it contacts several helices of the 16S rRNA. In the 70S ribosome it contacts the 23S rRNA (bridge B1a) and protein L5 of the 50S subunit (bridge B1b), connecting the 2 subunits; these bridges are implicated in subunit movement. Contacts the tRNAs in the A and P-sites. The sequence is that of Small ribosomal subunit protein uS13 from Natranaerobius thermophilus (strain ATCC BAA-1301 / DSM 18059 / JW/NM-WN-LF).